A 151-amino-acid polypeptide reads, in one-letter code: Mini-ribonuclease 3 (151 aa).

Asp28 is a catalytic residue.

Belongs to the MrnC RNase family. In terms of assembly, homodimer. The cofactor is Mg(2+).

The protein resides in the cytoplasm. In terms of biological role, involved in correct processing of both the 5' and 3' ends of 23S rRNA precursor. Processes 30S rRNA precursor transcript even in absence of ribonuclease 3 (Rnc); Rnc processes 30S rRNA into smaller rRNA precursors. This chain is Mini-ribonuclease 3, found in Clostridium tetani (strain Massachusetts / E88).